Reading from the N-terminus, the 291-residue chain is Regulator of rDNA transcription protein 5 (291 aa).

In terms of domain architecture, RRM spans 18–105 (TTVYISNLPF…QKLFLKLHVP (88 aa)). A disordered region spans residues 235-291 (TNARDPPPAALAEPAPAPAPAPVEPAEQVQEGQDNAETNDVPPPPASSSDRPTVAAA). Residues 239–257 (DPPPAALAEPAPAPAPAPV) are compositionally biased toward pro residues.

It belongs to the RRT5 family.

Functionally, may be involved in the modulation of rDNA transcription. In Saccharomyces cerevisiae (strain Lalvin EC1118 / Prise de mousse) (Baker's yeast), this protein is Regulator of rDNA transcription protein 5 (RRT5).